Here is a 503-residue protein sequence, read N- to C-terminus: Aromatase (503 aa).

3 helical membrane passes run 19-39 (EVMP…LLVW), 51-71 (GYCM…MGIG), and 303-323 (MLIA…FLIA). Substrate contacts are provided by Asp309 and Met374. Heme is bound at residue Cys437.

Belongs to the cytochrome P450 family. The cofactor is heme.

The protein resides in the endoplasmic reticulum membrane. Its subcellular location is the microsome membrane. The enzyme catalyses testosterone + 3 reduced [NADPH--hemoprotein reductase] + 3 O2 = 17beta-estradiol + formate + 3 oxidized [NADPH--hemoprotein reductase] + 4 H2O + 4 H(+). It carries out the reaction androst-4-ene-3,17-dione + 3 reduced [NADPH--hemoprotein reductase] + 3 O2 = estrone + formate + 3 oxidized [NADPH--hemoprotein reductase] + 4 H2O + 4 H(+). It catalyses the reaction androst-4-ene-3,17-dione + reduced [NADPH--hemoprotein reductase] + O2 = 19-hydroxyandrost-4-ene-3,17-dione + oxidized [NADPH--hemoprotein reductase] + H2O + H(+). The catalysed reaction is 19-hydroxyandrost-4-ene-3,17-dione + reduced [NADPH--hemoprotein reductase] + O2 = 19-oxo-androst-4-ene-3,17-dione + oxidized [NADPH--hemoprotein reductase] + 2 H2O + H(+). The enzyme catalyses 19-oxo-androst-4-ene-3,17-dione + reduced [NADPH--hemoprotein reductase] + O2 = estrone + formate + oxidized [NADPH--hemoprotein reductase] + H2O + 2 H(+). It carries out the reaction estrone + reduced [NADPH--hemoprotein reductase] + O2 = 2-hydroxyestrone + oxidized [NADPH--hemoprotein reductase] + H2O + H(+). It catalyses the reaction 17beta-hydroxy-5alpha-androstan-3-one + reduced [NADPH--hemoprotein reductase] + O2 = 17beta,19-dihydroxy-3-oxo-5alpha-androstanone + oxidized [NADPH--hemoprotein reductase] + H2O + H(+). The catalysed reaction is 17beta,19-dihydroxy-3-oxo-5alpha-androstanone + reduced [NADPH--hemoprotein reductase] + O2 = 17beta-hydroxy-3,19-dioxo-5alpha-androstanone + oxidized [NADPH--hemoprotein reductase] + 2 H2O + H(+). The enzyme catalyses 17beta-hydroxy-3,19-dioxo-5alpha-androstanone + reduced [NADPH--hemoprotein reductase] + O2 = 17beta-hydroxy-3-oxo-19-nor-5alpha-androst-1-ene + formate + oxidized [NADPH--hemoprotein reductase] + H2O + 2 H(+). The protein operates within steroid hormone biosynthesis. A cytochrome P450 monooxygenase that catalyzes the conversion of C19 androgens, androst-4-ene-3,17-dione (androstenedione) and testosterone to the C18 estrogens, estrone and estradiol, respectively. Catalyzes three successive oxidations of C19 androgens: two conventional oxidations at C19 yielding 19-hydroxy and 19-oxo/19-aldehyde derivatives, followed by a third oxidative aromatization step that involves C1-beta hydrogen abstraction combined with cleavage of the C10-C19 bond to yield a phenolic A ring and formic acid. Alternatively, the third oxidative reaction yields a 19-norsteroid and formic acid. Converts dihydrotestosterone to delta1,10-dehydro 19-nordihydrotestosterone and may play a role in homeostasis of this potent androgen. Also displays 2-hydroxylase activity toward estrone. Mechanistically, uses molecular oxygen inserting one oxygen atom into a substrate, and reducing the second into a water molecule, with two electrons provided by NADPH via cytochrome P450 reductase (CPR; NADPH-ferrihemoprotein reductase). This chain is Aromatase (CYP19A1), found in Canis lupus familiaris (Dog).